Consider the following 359-residue polypeptide: Membrane-bound lytic murein transglycosylase C (359 aa).

The first 16 residues, 1–16 (MKKYLALALIAPLLIS), serve as a signal peptide directing secretion. Cys17 carries the N-palmitoyl cysteine lipid modification. Cys17 carries S-diacylglycerol cysteine lipidation.

The protein belongs to the transglycosylase Slt family.

It is found in the cell outer membrane. The enzyme catalyses Exolytic cleavage of the (1-&gt;4)-beta-glycosidic linkage between N-acetylmuramic acid (MurNAc) and N-acetylglucosamine (GlcNAc) residues in peptidoglycan, from either the reducing or the non-reducing ends of the peptidoglycan chains, with concomitant formation of a 1,6-anhydrobond in the MurNAc residue.. Murein-degrading enzyme. May play a role in recycling of muropeptides during cell elongation and/or cell division. This Escherichia coli O157:H7 protein is Membrane-bound lytic murein transglycosylase C.